The primary structure comprises 57 residues: Small nuclear protein PRAC1 (57 aa).

The segment at R38 to P57 is disordered.

In terms of tissue distribution, highly expressed in prostate, rectum, and distal colon, and weakly expressed in bladder. Expressed in prostate cancer cell lines.

The protein localises to the nucleus. This Homo sapiens (Human) protein is Small nuclear protein PRAC1 (PRAC1).